We begin with the raw amino-acid sequence, 353 residues long: DNA integrity scanning protein DisA (353 aa).

The DAC domain occupies 6–144 (DKELMNILKI…GGIKYVLRDS (139 aa)). ATP-binding positions include Gly73, Leu91, and 104-108 (TRHRT).

It belongs to the DisA family. As to quaternary structure, homooctamer. It depends on Mg(2+) as a cofactor.

The catalysed reaction is 2 ATP = 3',3'-c-di-AMP + 2 diphosphate. Its function is as follows. Participates in a DNA-damage check-point that is active prior to asymmetric division when DNA is damaged. DisA forms globular foci that rapidly scan along the chromosomes during sporulation, searching for lesions. When a lesion is present, DisA pauses at the lesion site. This triggers a cellular response that culminates in a temporary block in sporulation initiation. Functionally, also has diadenylate cyclase activity, catalyzing the condensation of 2 ATP molecules into cyclic di-AMP (c-di-AMP). c-di-AMP acts as a signaling molecule that couples DNA integrity with progression of sporulation. The rise in c-di-AMP level generated by DisA while scanning the chromosome, operates as a positive signal that advances sporulation; upon encountering a lesion, the DisA focus arrests at the damaged site and halts c-di-AMP synthesis. The polypeptide is DNA integrity scanning protein DisA (Clostridium botulinum (strain Loch Maree / Type A3)).